The primary structure comprises 218 residues: Probable transaldolase (218 aa).

K87 functions as the Schiff-base intermediate with substrate in the catalytic mechanism.

It belongs to the transaldolase family. Type 3B subfamily.

It localises to the cytoplasm. The enzyme catalyses D-sedoheptulose 7-phosphate + D-glyceraldehyde 3-phosphate = D-erythrose 4-phosphate + beta-D-fructose 6-phosphate. Its pathway is carbohydrate degradation; pentose phosphate pathway; D-glyceraldehyde 3-phosphate and beta-D-fructose 6-phosphate from D-ribose 5-phosphate and D-xylulose 5-phosphate (non-oxidative stage): step 2/3. Functionally, transaldolase is important for the balance of metabolites in the pentose-phosphate pathway. The sequence is that of Probable transaldolase from Flavobacterium psychrophilum (strain ATCC 49511 / DSM 21280 / CIP 103535 / JIP02/86).